The primary structure comprises 529 residues: Chaperonin GroEL, chloroplastic (529 aa).

ATP-binding positions include 29–32, 86–90, G414, 480–482, and D496; these read TLGP, DGTTT, and DAA.

It belongs to the chaperonin (HSP60) family. In terms of assembly, forms a cylinder of 14 subunits composed of two heptameric rings stacked back-to-back. Interacts with the co-chaperonin GroES.

The protein localises to the plastid. The protein resides in the chloroplast. The catalysed reaction is ATP + H2O + a folded polypeptide = ADP + phosphate + an unfolded polypeptide.. In terms of biological role, together with its co-chaperonin GroES, plays an essential role in assisting protein folding. The GroEL-GroES system forms a nano-cage that allows encapsulation of the non-native substrate proteins and provides a physical environment optimized to promote and accelerate protein folding. This Guillardia theta (Cryptophyte) protein is Chaperonin GroEL, chloroplastic.